Reading from the N-terminus, the 690-residue chain is Secreted LysM effector Vd5LysM (690 aa).

Asparagine 4 and asparagine 69 each carry an N-linked (GlcNAc...) asparagine glycan. 3 LysM domains span residues 203–248 (TQYT…SLCI), 253–301 (DTVT…TLCI), and 341–387 (RWYN…SYCV). N-linked (GlcNAc...) asparagine glycans are attached at residues asparagine 260, asparagine 295, asparagine 375, asparagine 410, asparagine 423, and asparagine 492. Residues 523–546 (PATATTGDGGPTPPAPTHSGQPQD) form a disordered region. Residues 549–596 (TWHVVSSGDSCQSVADDAGISRDQFHDWNPAVGRDCSTNFWLGQAYCV) enclose the LysM 4 domain. Over residues 606-619 (STVASSTTSSVTPG) the composition is skewed to low complexity. Positions 606–636 (STVASSTTSSVTPGPSKPEPPGPTHTGQPSD) are disordered. The 48-residue stretch at 639–686 (EWDVVETGDTCGSLAESNDISLSQFFDWNPAVSRDCVANFWIGQAYCI) folds into the LysM 5 domain.

This sequence belongs to the secreted LysM effector family.

In terms of biological role, might have a role in sequestration of chitin oligosaccharides (breakdown products of fungal cell walls that are released during invasion and act as triggers of host immunity) to dampen host defense. Does not play an important role during host colonization. The polypeptide is Secreted LysM effector Vd5LysM (Verticillium dahliae (strain VdLs.17 / ATCC MYA-4575 / FGSC 10137) (Verticillium wilt)).